The following is a 186-amino-acid chain: Peptidyl-tRNA hydrolase (186 aa).

Position 14 (Y14) interacts with tRNA. Residue H19 is the Proton acceptor of the active site. Y64, N66, and N113 together coordinate tRNA.

The protein belongs to the PTH family. Monomer.

It localises to the cytoplasm. It carries out the reaction an N-acyl-L-alpha-aminoacyl-tRNA + H2O = an N-acyl-L-amino acid + a tRNA + H(+). Hydrolyzes ribosome-free peptidyl-tRNAs (with 1 or more amino acids incorporated), which drop off the ribosome during protein synthesis, or as a result of ribosome stalling. In terms of biological role, catalyzes the release of premature peptidyl moieties from peptidyl-tRNA molecules trapped in stalled 50S ribosomal subunits, and thus maintains levels of free tRNAs and 50S ribosomes. The chain is Peptidyl-tRNA hydrolase from Agathobacter rectalis (strain ATCC 33656 / DSM 3377 / JCM 17463 / KCTC 5835 / VPI 0990) (Eubacterium rectale).